The sequence spans 286 residues: Nucleotide-binding protein APL_0334 (286 aa).

8-15 (GRSGSGKS) contacts ATP. A GTP-binding site is contributed by 56–59 (DIRN).

Belongs to the RapZ-like family.

In terms of biological role, displays ATPase and GTPase activities. The polypeptide is Nucleotide-binding protein APL_0334 (Actinobacillus pleuropneumoniae serotype 5b (strain L20)).